Consider the following 80-residue polypeptide: Large ribosomal subunit protein bL28 (80 aa).

Residues 1 to 21 (MSRICQITRKKSMKGNSVAHS) form a disordered region.

Belongs to the bacterial ribosomal protein bL28 family.

The sequence is that of Large ribosomal subunit protein bL28 from Azobacteroides pseudotrichonymphae genomovar. CFP2.